The chain runs to 442 residues: UDP-N-acetylmuramate--L-alanine ligase (442 aa).

109 to 115 (GAHGKTS) lines the ATP pocket.

The protein belongs to the MurCDEF family.

It localises to the cytoplasm. The catalysed reaction is UDP-N-acetyl-alpha-D-muramate + L-alanine + ATP = UDP-N-acetyl-alpha-D-muramoyl-L-alanine + ADP + phosphate + H(+). The protein operates within cell wall biogenesis; peptidoglycan biosynthesis. Functionally, cell wall formation. This chain is UDP-N-acetylmuramate--L-alanine ligase, found in Streptococcus pyogenes serotype M2 (strain MGAS10270).